The sequence spans 198 residues: Armadillo repeat-containing protein 7 (198 aa).

2 ARM repeats span residues 57 to 99 (QVLD…QAGG) and 100 to 140 (LPLI…TSLP). S169 is modified (phosphoserine).

Component of the minor spliceosome. Within this complex, interacts with RBM48.

In terms of biological role, as a component of the minor spliceosome, involved in the splicing of U12-type introns in pre-mRNAs. This chain is Armadillo repeat-containing protein 7 (Armc7), found in Mus musculus (Mouse).